Reading from the N-terminus, the 440-residue chain is D-serine dehydratase (440 aa).

N6-(pyridoxal phosphate)lysine is present on lysine 116.

This sequence belongs to the serine/threonine dehydratase family. DsdA subfamily. Monomer. It depends on pyridoxal 5'-phosphate as a cofactor.

It catalyses the reaction D-serine = pyruvate + NH4(+). The sequence is that of D-serine dehydratase from Salmonella enteritidis PT4 (strain P125109).